The sequence spans 492 residues: Probable glycine dehydrogenase (decarboxylating) subunit 2 (492 aa).

Lysine 274 is subject to N6-(pyridoxal phosphate)lysine.

Belongs to the GcvP family. C-terminal subunit subfamily. As to quaternary structure, the glycine cleavage system is composed of four proteins: P, T, L and H. In this organism, the P 'protein' is a heterodimer of two subunits. Requires pyridoxal 5'-phosphate as cofactor.

The catalysed reaction is N(6)-[(R)-lipoyl]-L-lysyl-[glycine-cleavage complex H protein] + glycine + H(+) = N(6)-[(R)-S(8)-aminomethyldihydrolipoyl]-L-lysyl-[glycine-cleavage complex H protein] + CO2. In terms of biological role, the glycine cleavage system catalyzes the degradation of glycine. The P protein binds the alpha-amino group of glycine through its pyridoxal phosphate cofactor; CO(2) is released and the remaining methylamine moiety is then transferred to the lipoamide cofactor of the H protein. The sequence is that of Probable glycine dehydrogenase (decarboxylating) subunit 2 from Exiguobacterium sibiricum (strain DSM 17290 / CCUG 55495 / CIP 109462 / JCM 13490 / 255-15).